Reading from the N-terminus, the 456-residue chain is 3-isopropylmalate dehydratase large subunit (456 aa).

[4Fe-4S] cluster is bound by residues Cys336, Cys396, and Cys399.

It belongs to the aconitase/IPM isomerase family. LeuC type 1 subfamily. Heterodimer of LeuC and LeuD. [4Fe-4S] cluster serves as cofactor.

The catalysed reaction is (2R,3S)-3-isopropylmalate = (2S)-2-isopropylmalate. It functions in the pathway amino-acid biosynthesis; L-leucine biosynthesis; L-leucine from 3-methyl-2-oxobutanoate: step 2/4. Functionally, catalyzes the isomerization between 2-isopropylmalate and 3-isopropylmalate, via the formation of 2-isopropylmaleate. The polypeptide is 3-isopropylmalate dehydratase large subunit (Staphylococcus haemolyticus (strain JCSC1435)).